The sequence spans 414 residues: Putative MSV199 domain-containing protein 148R (414 aa).

Positions 209–293 (DKMQISSLET…DSVVEKLGIA (85 aa)) form a coiled coil.

This chain is Putative MSV199 domain-containing protein 148R, found in Acheta domesticus (House cricket).